The following is a 1058-amino-acid chain: Leucine-rich repeat and coiled-coil domain-containing protein PF3D7_0703800 (1058 aa).

The segment covering 1–10 (MAIKKKKKET) has biased composition (basic residues). The tract at residues 1–34 (MAIKKKKKETKSKDNNNDNLRNEKKSTNLENGKY) is disordered. Basic and acidic residues predominate over residues 11 to 34 (KSKDNNNDNLRNEKKSTNLENGKY). Positions 515–544 (LKQLYTFIKNYENNNDKLNIKSQIINKDKN) form a coiled coil. Over residues 641 to 661 (ENKDHLQHEEHTHEEEPKDAN) the composition is skewed to basic and acidic residues. 2 disordered regions span residues 641 to 665 (ENKD…GDMV) and 706 to 728 (NIED…ENMK). The stretch at 872-905 (NYDHTQENILKNKNNMEDQNNLLEQNIMTDQLQN) forms a coiled coil.

The protein is Leucine-rich repeat and coiled-coil domain-containing protein PF3D7_0703800 of Plasmodium falciparum (isolate 3D7).